Reading from the N-terminus, the 317-residue chain is Ribonuclease 3-like protein 2 (317 aa).

The disordered stretch occupies residues 1 to 26 (MAPPPAMKPASRKRGPPAPDPVELPP). Positions 16-26 (PPAPDPVELPP) are enriched in pro residues. Positions 37–185 (AARVERLLRY…IAAAVYVDCK (149 aa)) constitute an RNase III domain. Residues Glu74, Asp171, and Glu174 each contribute to the Mg(2+) site. A DRBM domain is found at 211-274 (QPVTMLHELC…ARDATRKLAG (64 aa)).

Mg(2+) serves as cofactor. Mn(2+) is required as a cofactor.

Functionally, cleaves double-stranded RNA (dsRNA). This Oryza sativa subsp. japonica (Rice) protein is Ribonuclease 3-like protein 2.